A 130-amino-acid chain; its full sequence is Metastasis-suppressor KiSS-1 (130 aa).

The first 19 residues, 1-19 (MISLASWQLLLLLCVASFG), serve as a signal peptide directing secretion. Residues 52–91 (RYAESKPGAAGLRARRTSPCPPVENPTGHQRPPCATRSRL) form a disordered region. C71 and C85 are oxidised to a cystine. Y110 carries the phosphotyrosine modification. Positions 110 to 119 (YNWNSFGLRY) are essential for receptor binding and receptor activation. The residue at position 119 (Y119) is a Tyrosine amide.

Belongs to the KISS1 family. Highest levels in the cecum and colon. Moderate levels present in the liver, spleen, kidney, ovary, uterus and small intestine. Low levels in the stomach, pancreas and placenta. Expressed only moderately in the placenta. Persistent expression is detected in hypothalamus throughout postnatal development, with maximum expression levels at puberty in both male and female. Hypothalamic expression is sensitive to neonatal imprinting by estrogen. Expression is higher in the hypothalamus than in the brainstem and spinal cord. In the brain, metastin-like immunoreactivity is found mainly in three groups of cells: dorsomedial hypothalamic nucleus, nucleus of the solitary tract, and caudal ventrolateral medulla.

The protein resides in the secreted. Metastasis suppressor protein. May regulate events downstream of cell-matrix adhesion, perhaps involving cytoskeletal reorganization. Generates a C-terminally amidated peptide, metastin which functions as the endogenous ligand of the G-protein coupled receptor GPR54. The receptor is also essential for normal gonadotropin-released hormone physiology and for puberty. The hypothalamic KiSS1/GPR54 system is a pivotal factor in central regulation of the gonadotropic axis at puberty and in adulthood. Intracerebroventricular administration induces an increase in serum LH and FSH levels in prepubertal male and female as well as in adult animals. This chain is Metastasis-suppressor KiSS-1 (Kiss1), found in Rattus norvegicus (Rat).